Here is a 64-residue protein sequence, read N- to C-terminus: LKDGYIVDDKNCTFFCGRNAYCNDECKKKGGESGYCQWASPYGNACWCYKLPDRVSIKEKGRCN.

The region spanning 2-64 (KDGYIVDDKN…VSIKEKGRCN (63 aa)) is the LCN-type CS-alpha/beta domain. 4 cysteine pairs are disulfide-bonded: Cys12–Cys63, Cys16–Cys36, Cys22–Cys46, and Cys26–Cys48. Asn64 carries the asparagine amide modification.

It belongs to the long (4 C-C) scorpion toxin superfamily. Sodium channel inhibitor family. Alpha subfamily. Expressed by the venom gland.

It is found in the secreted. Alpha toxins bind voltage-independently at site-3 of sodium channels (Nav) and inhibit the inactivation of the activated channels, thereby blocking neuronal transmission. Is active on mammals and bind with high affinity to rat brain synaptosome. Does not display phospholipid-binding activity. This Leiurus quinquestriatus quinquestriatus (Egyptian scorpion) protein is Alpha-mammal toxin Lqq5.